Consider the following 245-residue polypeptide: Probable phosphatase YcdX (245 aa).

Zn(2+)-binding residues include His7, His9, His15, His40, Glu73, His101, His131, Asp192, and His194.

It belongs to the PHP family. In terms of assembly, homotrimer. Zn(2+) is required as a cofactor.

The chain is Probable phosphatase YcdX from Salmonella heidelberg (strain SL476).